A 311-amino-acid polypeptide reads, in one-letter code: Ribosomal RNA small subunit methyltransferase H (311 aa).

S-adenosyl-L-methionine contacts are provided by residues 33–35 (AGH), Asp53, Phe80, Asp101, and Gln108.

The protein belongs to the methyltransferase superfamily. RsmH family.

The protein resides in the cytoplasm. It catalyses the reaction cytidine(1402) in 16S rRNA + S-adenosyl-L-methionine = N(4)-methylcytidine(1402) in 16S rRNA + S-adenosyl-L-homocysteine + H(+). Its function is as follows. Specifically methylates the N4 position of cytidine in position 1402 (C1402) of 16S rRNA. This chain is Ribosomal RNA small subunit methyltransferase H, found in Clostridioides difficile (strain 630) (Peptoclostridium difficile).